A 170-amino-acid polypeptide reads, in one-letter code: Putative pre-16S rRNA nuclease (170 aa).

Positions 1–18 (MGTDDRLPDRPGADDPGR) are enriched in basic and acidic residues. Residues 1–22 (MGTDDRLPDRPGADDPGRGRRI) form a disordered region.

The protein belongs to the YqgF nuclease family.

The protein resides in the cytoplasm. In terms of biological role, could be a nuclease involved in processing of the 5'-end of pre-16S rRNA. The chain is Putative pre-16S rRNA nuclease from Mycolicibacterium smegmatis (strain ATCC 700084 / mc(2)155) (Mycobacterium smegmatis).